The primary structure comprises 265 residues: 2-C-methyl-D-erythritol 4-phosphate cytidylyltransferase (265 aa).

The span at 231–241 (DRGGASREAER) shows a compositional bias: basic and acidic residues. A disordered region spans residues 231 to 265 (DRGGASREAERSAMPSAATSVFSGARSAASGSEEV). Residues 253–265 (SGARSAASGSEEV) show a composition bias toward low complexity.

It belongs to the IspD/TarI cytidylyltransferase family. IspD subfamily.

The catalysed reaction is 2-C-methyl-D-erythritol 4-phosphate + CTP + H(+) = 4-CDP-2-C-methyl-D-erythritol + diphosphate. Its pathway is isoprenoid biosynthesis; isopentenyl diphosphate biosynthesis via DXP pathway; isopentenyl diphosphate from 1-deoxy-D-xylulose 5-phosphate: step 2/6. Its function is as follows. Catalyzes the formation of 4-diphosphocytidyl-2-C-methyl-D-erythritol from CTP and 2-C-methyl-D-erythritol 4-phosphate (MEP). The protein is 2-C-methyl-D-erythritol 4-phosphate cytidylyltransferase of Xanthomonas campestris pv. campestris (strain B100).